The chain runs to 791 residues: Protein Rf1, mitochondrial (791 aa).

The transit peptide at 1 to 27 (MARRAASRAVGALRSDGSIQGRGGRAG) directs the protein to the mitochondrion. Residues 1–31 (MARRAASRAVGALRSDGSIQGRGGRAGGSGA) are disordered. The span at 20-30 (QGRGGRAGGSG) shows a compositional bias: gly residues. PPR repeat units follow at residues 86-120 (DLCT…GFRV), 121-156 (DAIA…GCIP), 157-194 (NVFS…GSPP), 195-229 (DVVS…GILP), 230-264 (DVVT…GVMP), 265-299 (DCMT…GVEP), 300-334 (DVVT…GLKP), 335-369 (EITT…GIHP), 370-404 (DHYV…GLNP), 405-439 (NAVT…GLSP), 440-474 (GNIV…GICL), 475-509 (NTIF…GVKP), 510-544 (NVIT…GLKP), 545-579 (NTVT…GVSP), 580-614 (DIIT…GTQI), 615-649 (ELST…DLKL), 650-684 (EART…GLVP), 685-719 (NYWT…GCTV), and 720-754 (DSGM…HFSL).

It localises to the mitochondrion. Reduces the expression of the cytoplasmic male sterility (CMS)-associated mitochondrial gene ORF79, encoding a cytotoxic peptide. Can restore male fertility by blocking ORF79 production via endonucleolytic cleavage of dicistronic ATP6/ORF79 mRNA. Promotes the editing of ATP6 mRNAs independently of its cleavage function. The polypeptide is Protein Rf1, mitochondrial (Rf1) (Oryza sativa subsp. indica (Rice)).